A 989-amino-acid chain; its full sequence is Presequence protease, mitochondrial (989 aa).

Residues 1–16 constitute a mitochondrion transit peptide; sequence MLRFQRFASSYAQAQA. Residue histidine 84 participates in Zn(2+) binding. Glutamate 87 functions as the Proton acceptor in the catalytic mechanism. Histidine 88 contributes to the Zn(2+) binding site. Residue glutamate 160 is part of the active site. Zn(2+) is bound at residue glutamate 185. Serine 920 carries the phosphoserine modification. Position 972-979 (972-979) interacts with ATP; it reads GPGIEGKT.

Belongs to the peptidase M16 family. PreP subfamily. In terms of assembly, monomer and homodimer; homodimerization is induced by binding of the substrate. Requires Zn(2+) as cofactor.

It is found in the mitochondrion intermembrane space. Its subcellular location is the mitochondrion matrix. Its activity is regulated as follows. Activated by nucleotides, including ATP, GTP, CTP, UTP, and ADP. Activated by copper, manganese, calcium and magnesium ions; copper and manganese restore activity following inactivation by EDTA (ethylenediaminetetraacetic acid). Inhibited by metal chelators including EDTA, EGTA (ethylene glycol bis(2-aminoethyl)tetraacetic acid), and 1,10-phenanthroline. Inhibited by copper, zinc, and iron ions. Also inhibited by dithiothreitol p-mercuribenzenesulfonic acid, N-ethylmaleimide, protoporphyrin, hemin, protamine and triarginine. In terms of biological role, degrades mitochondrial transit peptides after their cleavage in the intermembrane space or in the matrix, and presequence peptides; clearance of these peptides is required to keep the presequence processing machinery running. Preferentially cleaves the N-terminal side of paired basic amino acid residues. Also degrades other unstructured peptides. May function as an ATP-dependent peptidase as opposed to a metalloendopeptidase. The polypeptide is Presequence protease, mitochondrial (Saccharomyces cerevisiae (strain ATCC 204508 / S288c) (Baker's yeast)).